Consider the following 159-residue polypeptide: Growth arrest and DNA damage-inducible protein GADD45 gamma (159 aa).

Positions 43–86 are homodimerization; that stretch reads VYESAKVLNVDPDNVTFCVLAADEEDEGDIALQIHFTLIQAFCC.

It belongs to the GADD45 family. In terms of assembly, undergoes concentration-dependent homodimerization, which is required for growth inhibititory activity and enhances interaction with PCNA. Interacts with GADD45GIP1. Interacts with PCNA.

Involved in the regulation of growth and apoptosis. Mediates activation of stress-responsive MTK1/MEKK4 MAPKKK. The sequence is that of Growth arrest and DNA damage-inducible protein GADD45 gamma (Gadd45g) from Rattus norvegicus (Rat).